The primary structure comprises 538 residues: Probable inorganic phosphate transporter 1-4 (538 aa).

Residues Met-1–Ala-23 are Cytoplasmic-facing. The helical transmembrane segment at Ile-24 to Val-44 threads the bilayer. Residues Thr-45–Ser-69 are Extracellular-facing. The chain crosses the membrane as a helical span at residues Ala-70–Leu-90. Over Gly-91–Lys-98 the chain is Cytoplasmic. A helical membrane pass occupies residues Val-99–Gly-119. Over Ser-120 to Lys-123 the chain is Extracellular. A helical transmembrane segment spans residues Gly-124–Tyr-144. At Pro-145–Phe-163 the chain is on the cytoplasmic side. A helical transmembrane segment spans residues Ile-164–Ile-184. The Extracellular portion of the chain corresponds to Val-185–Ala-210. A helical transmembrane segment spans residues Asp-211–Trp-231. The Cytoplasmic segment spans residues Arg-232–His-294. A helical membrane pass occupies residues Leu-295–Phe-315. Topologically, residues Gln-316–Thr-346 are extracellular. Residues Leu-347–Ile-367 form a helical membrane-spanning segment. The Cytoplasmic portion of the chain corresponds to Gly-368–Arg-369. The helical transmembrane segment at Phe-370–Pro-390 threads the bilayer. The Extracellular segment spans residues Tyr-391–Thr-396. A helical transmembrane segment spans residues Pro-397–Gly-417. The Cytoplasmic segment spans residues Pro-418 to Gly-440. The chain crosses the membrane as a helical span at residues Ile-441–Ala-461. At Gln-462–Asn-481 the chain is on the extracellular side. Residues Ser-482–Glu-502 traverse the membrane as a helical segment. Over Ser-503–Ala-538 the chain is Cytoplasmic. The segment at Ser-507–Ala-538 is disordered. Positions Leu-511–Pro-522 are enriched in acidic residues.

This sequence belongs to the major facilitator superfamily. Phosphate:H(+) symporter (TC 2.A.1.9) family.

It localises to the membrane. High-affinity transporter for external inorganic phosphate. The polypeptide is Probable inorganic phosphate transporter 1-4 (PHT1-4) (Oryza sativa subsp. indica (Rice)).